We begin with the raw amino-acid sequence, 473 residues long: Photosystem II CP43 reaction center protein (473 aa).

Positions 1–14 are excised as a propeptide; that stretch reads MKTLYSLRRFYPVE. Position 15 is an N-acetylthreonine (T15). T15 carries the post-translational modification Phosphothreonine. 5 helical membrane passes run 69-93, 134-155, 178-200, 255-275, and 291-312; these read LFEVAHFVPEKPMYEQGLILLPHLA, LLGPETLEESFPFFGYVWKDRN, KALYFGGVYDTWAPGGGDVRKIT, KPFAWARRALVWSGEAYLSYS, and WFNNTAYPSEFYGPTGPEASQA. Position 367 (E367) interacts with [CaMn4O5] cluster. A helical transmembrane segment spans residues 447-471; the sequence is RARAAAAGFEKGIDRDFEPVLSMTP.

Belongs to the PsbB/PsbC family. PsbC subfamily. In terms of assembly, PSII is composed of 1 copy each of membrane proteins PsbA, PsbB, PsbC, PsbD, PsbE, PsbF, PsbH, PsbI, PsbJ, PsbK, PsbL, PsbM, PsbT, PsbX, PsbY, PsbZ, Psb30/Ycf12, at least 3 peripheral proteins of the oxygen-evolving complex and a large number of cofactors. It forms dimeric complexes. The cofactor is Binds multiple chlorophylls and provides some of the ligands for the Ca-4Mn-5O cluster of the oxygen-evolving complex. It may also provide a ligand for a Cl- that is required for oxygen evolution. PSII binds additional chlorophylls, carotenoids and specific lipids..

It localises to the plastid. It is found in the chloroplast thylakoid membrane. In terms of biological role, one of the components of the core complex of photosystem II (PSII). It binds chlorophyll and helps catalyze the primary light-induced photochemical processes of PSII. PSII is a light-driven water:plastoquinone oxidoreductase, using light energy to abstract electrons from H(2)O, generating O(2) and a proton gradient subsequently used for ATP formation. This Vitis vinifera (Grape) protein is Photosystem II CP43 reaction center protein.